A 334-amino-acid polypeptide reads, in one-letter code: N-acetylmuramate/N-acetylglucosamine kinase (334 aa).

Belongs to the kinase AmgK family.

The catalysed reaction is N-acetyl-D-muramate + ATP = N-acetyl-alpha-D-muramate 1-phosphate + ADP + H(+). The enzyme catalyses N-acetyl-D-glucosamine + ATP = N-acetyl-alpha-D-glucosamine 1-phosphate + ADP + H(+). Its pathway is cell wall biogenesis; peptidoglycan recycling. Sugar kinase that catalyzes the ATP-dependent phosphorylation of N-acetylmuramate (MurNAc) and N-acetylglucosamine (GlcNAc) at its C1 hydroxyl group, leading to MurNAc alpha-1P and GlcNAc alpha-1P, respectively. Is likely involved in peptidoglycan recycling as part of a cell wall recycling pathway that bypasses de novo biosynthesis of the peptidoglycan precursor UDP-MurNAc. Is able to complement the fosfomycin sensitivity phenotype of a P.putida mutant lacking amgK. The protein is N-acetylmuramate/N-acetylglucosamine kinase of Neisseria meningitidis serogroup B (strain ATCC BAA-335 / MC58).